The following is a 669-amino-acid chain: DNA ligase (669 aa).

NAD(+) is bound by residues 34-38 (DAEYD), 83-84 (SL), and Glu-114. Lys-116 functions as the N6-AMP-lysine intermediate in the catalytic mechanism. The NAD(+) site is built by Arg-137, Glu-171, Lys-287, and Lys-311. 4 residues coordinate Zn(2+): Cys-405, Cys-408, Cys-423, and Cys-428. The BRCT domain maps to 591–669 (NVESYFAGKT…EERFLQELNK (79 aa)).

Belongs to the NAD-dependent DNA ligase family. LigA subfamily. It depends on Mg(2+) as a cofactor. Requires Mn(2+) as cofactor.

It carries out the reaction NAD(+) + (deoxyribonucleotide)n-3'-hydroxyl + 5'-phospho-(deoxyribonucleotide)m = (deoxyribonucleotide)n+m + AMP + beta-nicotinamide D-nucleotide.. Functionally, DNA ligase that catalyzes the formation of phosphodiester linkages between 5'-phosphoryl and 3'-hydroxyl groups in double-stranded DNA using NAD as a coenzyme and as the energy source for the reaction. It is essential for DNA replication and repair of damaged DNA. In Bacillus cereus (strain G9842), this protein is DNA ligase.